The sequence spans 904 residues: Anoctamin-5 (904 aa).

Residues methionine 1–lysine 290 lie on the Cytoplasmic side of the membrane. Residues isoleucine 291–valine 311 traverse the membrane as a helical segment. Over glycine 312 to asparagine 371 the chain is Extracellular. Asparagine 326, asparagine 357, and asparagine 371 each carry an N-linked (GlcNAc...) asparagine glycan. A helical transmembrane segment spans residues glutamate 372–tryptophan 392. Topologically, residues lysine 393–serine 453 are cytoplasmic. The chain crosses the membrane as a helical span at residues glycine 454–tyrosine 474. Topologically, residues arginine 475–glutamine 502 are extracellular. The helical transmembrane segment at leucine 503–phenylalanine 523 threads the bilayer. Topologically, residues tyrosine 524–threonine 548 are cytoplasmic. A helical membrane pass occupies residues leucine 549–phenylalanine 569. At lysine 570–threonine 667 the chain is on the extracellular side. Residues valine 668–alanine 688 form a helical membrane-spanning segment. At leucine 689–aspartate 723 the chain is on the cytoplasmic side. Residues isoleucine 724 to serine 744 traverse the membrane as a helical segment. At aspartate 745 to threonine 825 the chain is on the extracellular side. Asparagine 759, asparagine 769, and asparagine 782 each carry an N-linked (GlcNAc...) asparagine glycan. The chain crosses the membrane as a helical span at residues phenylalanine 826–proline 846. At aspartate 847 to valine 904 the chain is on the cytoplasmic side.

Belongs to the anoctamin family. Highly expressed in skeletal muscle, bone tissues and thyroid gland.

The protein resides in the endoplasmic reticulum membrane. It is found in the cell membrane. In terms of biological role, plays a role in plasma membrane repair in a process involving annexins. Does not exhibit calcium-activated chloride channel (CaCC) activity. The chain is Anoctamin-5 (Ano5) from Mus musculus (Mouse).